The sequence spans 415 residues: MSHKSAEMYELKKKVEELKKIRGRATELVSLYIPADYDLNKVMQQLREEYGTAQNIKSKTTRKNVLGALERAMQHLKLYRQTPETGLALFVGNVSEQEGVSDIRVFAIVPPEPLNVRLYRCDQTFVTEPLEEMLRVKDAYGLITVEKNEATIGILRGKKIEVIEDLTSNVPGKTRAGGQSARRYERIREQEAHEFMKRIGEHASSVFLPLLEKDELKGIIIGGPGPTKEEFVEGEYLHHELRKRILGVVDISYHGEYGLRELVEKASDILREHEAVKERKLVQQFFKHLVKDTGLITYGEKEVRKALELGAVDILLLSEGYDRVRVKALCNNCGWEELKTMTEAEFELYKKNLKACPKCNSQNISVEKWDVAEELIKIAEEGGAEVEIISLDTEEGQQFYKAFGGIAAILRYKLQ.

It belongs to the eukaryotic release factor 1 family. As to quaternary structure, heterodimer of two subunits, one of which binds GTP.

The protein resides in the cytoplasm. Functionally, directs the termination of nascent peptide synthesis (translation) in response to the termination codons UAA, UAG and UGA. In Thermococcus sibiricus (strain DSM 12597 / MM 739), this protein is Peptide chain release factor subunit 1.